The chain runs to 319 residues: MLFNNFLCFAVSAIPLVSAMPLGNAPYHHHHHAGLNASNITVGVNVTNTTAFSKRDGGFPDGVYDCSSFPDDQNGVVRLDYLGFGGWSGVQKNDGKYGTASTCQDNTYCSYACKPGMSKTQWPSEQPDNGVSVGGLYCKNGKLYLTQKDNSNLCEDGKGTAYVKNTLSSNVAICRTDYPGTENMNIPTNIDGGSKQPLSDVDEDSYYNWGGKKTSAQYYVNKSGRSAEDVCVWGNEGDDYGNWAPMNFGSGYTDGKTWLSMSFNPLSSAKLDYNIRIKSDGGSLSGDCYYEDGSFHGSTADSSGCTVSVTGGNAYFELY.

The signal sequence occupies residues 1 to 19 (MLFNNFLCFAVSAIPLVSA). N-linked (GlcNAc...) asparagine glycosylation is found at Asn36, Asn39, Asn45, Asn48, and Asn221.

The protein belongs to the SUN family.

It is found in the secreted. Functionally, cell surface beta-glucosidase involved in cell wall biogenesis. In Schizosaccharomyces pombe (strain 972 / ATCC 24843) (Fission yeast), this protein is Probable secreted beta-glucosidase C2G2.17c.